We begin with the raw amino-acid sequence, 131 residues long: Class I hydrophobin POH2 (131 aa).

Residues 1–21 form the signal peptide; the sequence is MFFRTSSLFTTIVAFTVMAAA. 4 cysteine pairs are disulfide-bonded: C50/C110, C57/C104, C58/C91, and C111/C124. N-linked (GlcNAc...) asparagine glycans are attached at residues N115 and N128.

The protein belongs to the fungal hydrophobin family. As to quaternary structure, self-assembles to form functional amyloid fibrils called rodlets. Self-assembly into fibrillar rodlets occurs spontaneously at hydrophobic:hydrophilic interfaces and the rodlets further associate laterally to form amphipathic monolayers. In terms of tissue distribution, expressionn is switched off in the fruiting bodies but abundantly expressed in the vegetative mycelium of both monokaryon and dikaryon.

It localises to the secreted. It is found in the cell wall. In terms of biological role, aerial growth, conidiation, and dispersal of filamentous fungi in the environment rely upon a capability of their secreting small amphipathic proteins called hydrophobins (HPBs) with low sequence identity. Class I can self-assemble into an outermost layer of rodlet bundles on aerial cell surfaces, conferring cellular hydrophobicity that supports fungal growth, development and dispersal; whereas Class II form highly ordered films at water-air interfaces through intermolecular interactions but contribute nothing to the rodlet structure. POH2 is a class I hydrophobin that causes a large drop in the water-surface tension, enabling hyphae to breach the interface and grow into the air, in both the primary and the secondary mycelium. In the latter mycelium POH2 maight also play a role in the emergence of fruiting bodies. Secreted POH2 could also play a role in facilitating lignin degradation. This chain is Class I hydrophobin POH2, found in Pleurotus ostreatus (Oyster mushroom).